A 290-amino-acid polypeptide reads, in one-letter code: 4-hydroxy-3-methylbut-2-enyl diphosphate reductase (290 aa).

Cys-13 is a binding site for [4Fe-4S] cluster. Positions 41 and 75 each coordinate (2E)-4-hydroxy-3-methylbut-2-enyl diphosphate. His-41 and His-75 together coordinate dimethylallyl diphosphate. Isopentenyl diphosphate-binding residues include His-41 and His-75. Cys-97 provides a ligand contact to [4Fe-4S] cluster. His-129 serves as a coordination point for (2E)-4-hydroxy-3-methylbut-2-enyl diphosphate. Dimethylallyl diphosphate is bound at residue His-129. His-129 contributes to the isopentenyl diphosphate binding site. Catalysis depends on Glu-131, which acts as the Proton donor. Thr-167 contacts (2E)-4-hydroxy-3-methylbut-2-enyl diphosphate. Residue Cys-198 participates in [4Fe-4S] cluster binding. Residues Ser-226, Ser-227, Asn-228, and Ser-270 each contribute to the (2E)-4-hydroxy-3-methylbut-2-enyl diphosphate site. Dimethylallyl diphosphate-binding residues include Ser-226, Ser-227, Asn-228, and Ser-270. 4 residues coordinate isopentenyl diphosphate: Ser-226, Ser-227, Asn-228, and Ser-270.

This sequence belongs to the IspH family. [4Fe-4S] cluster is required as a cofactor.

It carries out the reaction isopentenyl diphosphate + 2 oxidized [2Fe-2S]-[ferredoxin] + H2O = (2E)-4-hydroxy-3-methylbut-2-enyl diphosphate + 2 reduced [2Fe-2S]-[ferredoxin] + 2 H(+). The catalysed reaction is dimethylallyl diphosphate + 2 oxidized [2Fe-2S]-[ferredoxin] + H2O = (2E)-4-hydroxy-3-methylbut-2-enyl diphosphate + 2 reduced [2Fe-2S]-[ferredoxin] + 2 H(+). Its pathway is isoprenoid biosynthesis; dimethylallyl diphosphate biosynthesis; dimethylallyl diphosphate from (2E)-4-hydroxy-3-methylbutenyl diphosphate: step 1/1. It participates in isoprenoid biosynthesis; isopentenyl diphosphate biosynthesis via DXP pathway; isopentenyl diphosphate from 1-deoxy-D-xylulose 5-phosphate: step 6/6. Catalyzes the conversion of 1-hydroxy-2-methyl-2-(E)-butenyl 4-diphosphate (HMBPP) into a mixture of isopentenyl diphosphate (IPP) and dimethylallyl diphosphate (DMAPP). Acts in the terminal step of the DOXP/MEP pathway for isoprenoid precursor biosynthesis. The sequence is that of 4-hydroxy-3-methylbut-2-enyl diphosphate reductase from Bacteroides fragilis (strain ATCC 25285 / DSM 2151 / CCUG 4856 / JCM 11019 / LMG 10263 / NCTC 9343 / Onslow / VPI 2553 / EN-2).